The primary structure comprises 172 residues: Shikimate kinase (172 aa).

11 to 16 (GAGKST) is a binding site for ATP. A Mg(2+)-binding site is contributed by Ser-15. 3 residues coordinate substrate: Asp-33, Arg-57, and Gly-79. ATP is bound at residue Arg-117. Position 136 (Arg-136) interacts with substrate. ATP is bound at residue Arg-153.

Belongs to the shikimate kinase family. In terms of assembly, monomer. The cofactor is Mg(2+).

It is found in the cytoplasm. The enzyme catalyses shikimate + ATP = 3-phosphoshikimate + ADP + H(+). The protein operates within metabolic intermediate biosynthesis; chorismate biosynthesis; chorismate from D-erythrose 4-phosphate and phosphoenolpyruvate: step 5/7. Its function is as follows. Catalyzes the specific phosphorylation of the 3-hydroxyl group of shikimic acid using ATP as a cosubstrate. The sequence is that of Shikimate kinase from Pseudomonas entomophila (strain L48).